Here is a 139-residue protein sequence, read N- to C-terminus: Membrane protein YqfB (139 aa).

The helical transmembrane segment at 3-23 (DLLTNPLIIAAIIGIISAIFG) threads the bilayer. The interval 25–87 (KSKEEKQNSQ…TARNLKGLER (63 aa)) is disordered. Positions 62-97 (NRMEQARREAEERRRETARNLKGLERDLAAAKQKTV) form a coiled coil. The segment covering 65-87 (EQARREAEERRRETARNLKGLER) has biased composition (basic and acidic residues).

It localises to the cell membrane. This chain is Membrane protein YqfB (yqfB), found in Bacillus subtilis (strain 168).